The primary structure comprises 103 residues: Iron-sulfur cluster assembly protein CyaY (103 aa).

Belongs to the frataxin family.

Functionally, involved in iron-sulfur (Fe-S) cluster assembly. May act as a regulator of Fe-S biogenesis. This Rickettsia peacockii (strain Rustic) protein is Iron-sulfur cluster assembly protein CyaY.